Reading from the N-terminus, the 295-residue chain is MDQKQIEEIVRSVMASMGQTAPAPSEAKCATTNCAAPVTSESCALDLGSAEAKAWIGVENPHRADVLTELRRSTVARVCTGRAGPRPRTQALLRFLADHSRSKDTVLKEVPEEWVKAQGLLEVRSEISDKNLYLTRPDMGRRLCAEAVEALKAQCVANPDVQVVISDGLSTDAITVNYEEILPPLMAGLKQAGLKVGTPFFVRYGRVKIEDQIGEILGAKVVILLVGERPGLGQSESLSCYAVYSPRMATTVEADRTCISNIHQGGTPPVEAAAVIVDLAKRMLEQKASGINMTR.

3 residues coordinate adenosylcob(III)alamin: V207, E228, and C258.

This sequence belongs to the EutC family. As to quaternary structure, the basic unit is a heterodimer which dimerizes to form tetramers. The heterotetramers trimerize; 6 large subunits form a core ring with 6 small subunits projecting outwards. Adenosylcob(III)alamin is required as a cofactor.

Its subcellular location is the bacterial microcompartment. It catalyses the reaction ethanolamine = acetaldehyde + NH4(+). The protein operates within amine and polyamine degradation; ethanolamine degradation. Its function is as follows. Catalyzes the deamination of various vicinal amino-alcohols to oxo compounds. Allows this organism to utilize ethanolamine as the sole source of nitrogen and carbon in the presence of external vitamin B12. The protein is Ethanolamine ammonia-lyase small subunit of Escherichia coli (strain 55989 / EAEC).